Reading from the N-terminus, the 124-residue chain is Small ribosomal subunit protein uS13 (124 aa).

Residues 89 to 124 (GRRHRQGLPVRGQRTKTNARTRKGPKRTVAGKKKAK) are disordered. A compositionally biased stretch (basic residues) spans 101–124 (QRTKTNARTRKGPKRTVAGKKKAK).

Belongs to the universal ribosomal protein uS13 family. Part of the 30S ribosomal subunit. Forms a loose heterodimer with protein S19. Forms two bridges to the 50S subunit in the 70S ribosome.

Located at the top of the head of the 30S subunit, it contacts several helices of the 16S rRNA. In the 70S ribosome it contacts the 23S rRNA (bridge B1a) and protein L5 of the 50S subunit (bridge B1b), connecting the 2 subunits; these bridges are implicated in subunit movement. Contacts the tRNAs in the A and P-sites. In Nocardioides sp. (strain ATCC BAA-499 / JS614), this protein is Small ribosomal subunit protein uS13.